The chain runs to 426 residues: Histidine--tRNA ligase (426 aa).

It belongs to the class-II aminoacyl-tRNA synthetase family.

Its subcellular location is the cytoplasm. It carries out the reaction tRNA(His) + L-histidine + ATP = L-histidyl-tRNA(His) + AMP + diphosphate + H(+). This chain is Histidine--tRNA ligase, found in Saccharolobus shibatae (strain ATCC 51178 / DSM 5389 / JCM 8931 / NBRC 15437 / B12) (Sulfolobus shibatae).